Reading from the N-terminus, the 409-residue chain is Calsequestrin-2 (409 aa).

A signal peptide spans 1 to 19; it reads MKRAHLFVVGVYLLSSCRA. Y282 carries the phosphotyrosine modification. A glycan (N-linked (GlcNAc...) asparagine) is linked at N335. Positions 364–409 are disordered; sequence DVLSGKINTEDDDNEDEDDDDDNDDDDDDNGNSDEEDNDDSDEDDE. Residues 373–409 show a composition bias toward acidic residues; that stretch reads EDDDNEDEDDDDDNDDDDDDNGNSDEEDNDDSDEDDE.

The protein belongs to the calsequestrin family. In terms of assembly, monomer, homodimer and homooligomer. Mostly monomeric in the absence of calcium. Forms higher oligomers in a calcium-dependent manner. Dimers associate to form tetramers, that then form linear homomer chains. Interacts with ASPH and TRDN. Phosphorylation in the C-terminus, probably by CK2, moderately increases calcium buffering capacity. Post-translationally, N-glycosylated. In terms of tissue distribution, detected in heart muscle (at protein level).

The protein localises to the sarcoplasmic reticulum lumen. Its function is as follows. Calsequestrin is a high-capacity, moderate affinity, calcium-binding protein and thus acts as an internal calcium store in muscle. Calcium ions are bound by clusters of acidic residues at the protein surface, especially at the interface between subunits. Can bind around 60 Ca(2+) ions. Regulates the release of lumenal Ca(2+) via the calcium release channel RYR2; this plays an important role in triggering muscle contraction. Plays a role in excitation-contraction coupling in the heart and in regulating the rate of heart beats. The chain is Calsequestrin-2 (CASQ2) from Oryctolagus cuniculus (Rabbit).